The primary structure comprises 122 residues: uncharacterized protein (122 aa).

It is found in the mitochondrion. This is an uncharacterized protein from Arabidopsis thaliana (Mouse-ear cress).